The chain runs to 464 residues: Argininosuccinate lyase (464 aa).

The protein belongs to the lyase 1 family. Argininosuccinate lyase subfamily.

The protein localises to the cytoplasm. It catalyses the reaction 2-(N(omega)-L-arginino)succinate = fumarate + L-arginine. It participates in amino-acid biosynthesis; L-arginine biosynthesis; L-arginine from L-ornithine and carbamoyl phosphate: step 3/3. This is Argininosuccinate lyase from Herminiimonas arsenicoxydans.